The primary structure comprises 179 residues: uncharacterized protein (179 aa).

This is an uncharacterized protein from Encephalitozoon cuniculi (strain GB-M1) (Microsporidian parasite).